Consider the following 298-residue polypeptide: Putative insertion sequence ATP-binding protein y4iQ/y4nD/y4sD (298 aa).

Position 114-121 (114-121 (GPPGGGKS)) interacts with ATP. Residues 276-298 (RQSEHDETLASDNQHDTFMPTAT) form a disordered region.

The protein belongs to the IS21/IS1162 putative ATP-binding protein family.

The chain is Putative insertion sequence ATP-binding protein y4iQ/y4nD/y4sD from Sinorhizobium fredii (strain NBRC 101917 / NGR234).